A 958-amino-acid polypeptide reads, in one-letter code: Protein translocase subunit SecA (958 aa).

ATP is bound by residues Gln-86, 104–108, and Asp-494; that span reads GEGKT. Disordered stretches follow at residues 863 to 883 and 902 to 937; these read AAAT…AEKT and QPIS…GTGK. 4 residues coordinate Zn(2+): Cys-941, Cys-943, Cys-952, and His-953.

This sequence belongs to the SecA family. Monomer and homodimer. Part of the essential Sec protein translocation apparatus which comprises SecA, SecYEG and auxiliary proteins SecDF. Other proteins may also be involved. Requires Zn(2+) as cofactor.

The protein localises to the cell membrane. The protein resides in the cytoplasm. The enzyme catalyses ATP + H2O + cellular proteinSide 1 = ADP + phosphate + cellular proteinSide 2.. Functionally, part of the Sec protein translocase complex. Interacts with the SecYEG preprotein conducting channel. Has a central role in coupling the hydrolysis of ATP to the transfer of proteins into and across the cell membrane, serving as an ATP-driven molecular motor driving the stepwise translocation of polypeptide chains across the membrane. The protein is Protein translocase subunit SecA of Bifidobacterium adolescentis (strain ATCC 15703 / DSM 20083 / NCTC 11814 / E194a).